Here is a 100-residue protein sequence, read N- to C-terminus: Small ribosomal subunit protein uS14c (100 aa).

This sequence belongs to the universal ribosomal protein uS14 family. As to quaternary structure, part of the 30S ribosomal subunit.

It is found in the plastid. The protein localises to the chloroplast. Functionally, binds 16S rRNA, required for the assembly of 30S particles. The protein is Small ribosomal subunit protein uS14c of Oedogonium cardiacum (Filamentous green alga).